Reading from the N-terminus, the 260-residue chain is Small ribosomal subunit protein uS2 (260 aa).

This sequence belongs to the universal ribosomal protein uS2 family.

The protein is Small ribosomal subunit protein uS2 of Mesorhizobium japonicum (strain LMG 29417 / CECT 9101 / MAFF 303099) (Mesorhizobium loti (strain MAFF 303099)).